The primary structure comprises 340 residues: Glyceraldehyde-3-phosphate dehydrogenase (340 aa).

NAD(+) is bound by residues 11–12 (SI) and Gly-111. 140–142 (SCN) contacts D-glyceraldehyde 3-phosphate. Catalysis depends on Cys-141, which acts as the Nucleophile. Arg-169 is an NAD(+) binding site. 195-196 (HG) contributes to the D-glyceraldehyde 3-phosphate binding site. Gln-303 serves as a coordination point for NAD(+).

The protein belongs to the glyceraldehyde-3-phosphate dehydrogenase family. As to quaternary structure, homotetramer.

Its subcellular location is the cytoplasm. It carries out the reaction D-glyceraldehyde 3-phosphate + phosphate + NADP(+) = (2R)-3-phospho-glyceroyl phosphate + NADPH + H(+). The catalysed reaction is D-glyceraldehyde 3-phosphate + phosphate + NAD(+) = (2R)-3-phospho-glyceroyl phosphate + NADH + H(+). It functions in the pathway carbohydrate degradation; glycolysis; pyruvate from D-glyceraldehyde 3-phosphate: step 1/5. This Methanococcus maripaludis (strain C5 / ATCC BAA-1333) protein is Glyceraldehyde-3-phosphate dehydrogenase.